The following is a 309-amino-acid chain: Porphobilinogen deaminase (309 aa).

At Cys-242 the chain carries S-(dipyrrolylmethanemethyl)cysteine.

This sequence belongs to the HMBS family. As to quaternary structure, monomer. Requires dipyrromethane as cofactor.

The catalysed reaction is 4 porphobilinogen + H2O = hydroxymethylbilane + 4 NH4(+). It functions in the pathway porphyrin-containing compound metabolism; protoporphyrin-IX biosynthesis; coproporphyrinogen-III from 5-aminolevulinate: step 2/4. In terms of biological role, tetrapolymerization of the monopyrrole PBG into the hydroxymethylbilane pre-uroporphyrinogen in several discrete steps. The polypeptide is Porphobilinogen deaminase (Legionella pneumophila (strain Lens)).